Consider the following 95-residue polypeptide: UPF0235 protein MS0322 (95 aa).

Belongs to the UPF0235 family.

The sequence is that of UPF0235 protein MS0322 from Mannheimia succiniciproducens (strain KCTC 0769BP / MBEL55E).